Reading from the N-terminus, the 138-residue chain is Phosphoribosyl-AMP cyclohydrolase (138 aa).

Asp-86 is a Mg(2+) binding site. Cys-87 lines the Zn(2+) pocket. Residues Asp-88 and Asp-90 each contribute to the Mg(2+) site. Cys-104 and Cys-111 together coordinate Zn(2+).

This sequence belongs to the PRA-CH family. In terms of assembly, homodimer. The cofactor is Mg(2+). Zn(2+) serves as cofactor.

It is found in the cytoplasm. The catalysed reaction is 1-(5-phospho-beta-D-ribosyl)-5'-AMP + H2O = 1-(5-phospho-beta-D-ribosyl)-5-[(5-phospho-beta-D-ribosylamino)methylideneamino]imidazole-4-carboxamide. The protein operates within amino-acid biosynthesis; L-histidine biosynthesis; L-histidine from 5-phospho-alpha-D-ribose 1-diphosphate: step 3/9. Its function is as follows. Catalyzes the hydrolysis of the adenine ring of phosphoribosyl-AMP. This is Phosphoribosyl-AMP cyclohydrolase from Marinobacter nauticus (strain ATCC 700491 / DSM 11845 / VT8) (Marinobacter aquaeolei).